The chain runs to 291 residues: Homeobox protein knotted-1-like 7 (291 aa).

Positions 194-214 (ELKLELKQGFKSRIEDVREEI) constitute an ELK domain. The segment at residues 215 to 278 (MRKRRAGKLP…NQRKRNWHNN (64 aa)) is a DNA-binding region (homeobox; TALE-type).

It belongs to the TALE/KNOX homeobox family. May form heterodimeric complex with the TALE/BELL proteins. Interacts with OFP1, OFP2, OFP3, OFP4 and OFP6.

The protein resides in the nucleus. Functionally, may be involved in secondary cell wall biosynthesis. This Arabidopsis thaliana (Mouse-ear cress) protein is Homeobox protein knotted-1-like 7 (KNAT7).